Consider the following 190-residue polypeptide: 3-isopropylmalate dehydratase small subunit (190 aa).

The protein belongs to the LeuD family. LeuD type 1 subfamily. In terms of assembly, heterodimer of LeuC and LeuD.

The enzyme catalyses (2R,3S)-3-isopropylmalate = (2S)-2-isopropylmalate. It functions in the pathway amino-acid biosynthesis; L-leucine biosynthesis; L-leucine from 3-methyl-2-oxobutanoate: step 2/4. Catalyzes the isomerization between 2-isopropylmalate and 3-isopropylmalate, via the formation of 2-isopropylmaleate. The protein is 3-isopropylmalate dehydratase small subunit of Staphylococcus aureus (strain JH1).